Reading from the N-terminus, the 147-residue chain is SsrA-binding protein (147 aa).

Belongs to the SmpB family.

Its subcellular location is the cytoplasm. In terms of biological role, required for rescue of stalled ribosomes mediated by trans-translation. Binds to transfer-messenger RNA (tmRNA), required for stable association of tmRNA with ribosomes. tmRNA and SmpB together mimic tRNA shape, replacing the anticodon stem-loop with SmpB. tmRNA is encoded by the ssrA gene; the 2 termini fold to resemble tRNA(Ala) and it encodes a 'tag peptide', a short internal open reading frame. During trans-translation Ala-aminoacylated tmRNA acts like a tRNA, entering the A-site of stalled ribosomes, displacing the stalled mRNA. The ribosome then switches to translate the ORF on the tmRNA; the nascent peptide is terminated with the 'tag peptide' encoded by the tmRNA and targeted for degradation. The ribosome is freed to recommence translation, which seems to be the essential function of trans-translation. This is SsrA-binding protein from Thermosipho melanesiensis (strain DSM 12029 / CIP 104789 / BI429).